Consider the following 374-residue polypeptide: Muconate cycloisomerase 1 (374 aa).

Belongs to the cycloisomerase 2 family. Homotetramer.

It carries out the reaction (S)-muconolactone = cis,cis-muconate + H(+). Its pathway is aromatic compound metabolism; beta-ketoadipate pathway; 5-oxo-4,5-dihydro-2-furylacetate from catechol: step 2/3. Catalyzes a syn cycloisomerization. This chain is Muconate cycloisomerase 1, found in Cutaneotrichosporon cutaneum (Yeast).